The primary structure comprises 664 residues: Transketolase 1 (664 aa).

H26 contacts substrate. Residues H66 and 114-116 each bind thiamine diphosphate; that span reads GPL. Mg(2+) is bound at residue D155. 2 residues coordinate thiamine diphosphate: G156 and N185. N185 and I187 together coordinate Mg(2+). Positions 260, 357, and 384 each coordinate substrate. Thiamine diphosphate is bound at residue H260. Residue E411 is the Proton donor of the active site. F437 provides a ligand contact to thiamine diphosphate. Substrate contacts are provided by H461, D469, and R520.

The protein belongs to the transketolase family. In terms of assembly, homodimer. Mg(2+) serves as cofactor. The cofactor is Ca(2+). Mn(2+) is required as a cofactor. Requires Co(2+) as cofactor. It depends on thiamine diphosphate as a cofactor.

The enzyme catalyses D-sedoheptulose 7-phosphate + D-glyceraldehyde 3-phosphate = aldehydo-D-ribose 5-phosphate + D-xylulose 5-phosphate. Functionally, catalyzes the transfer of a two-carbon ketol group from a ketose donor to an aldose acceptor, via a covalent intermediate with the cofactor thiamine pyrophosphate. The chain is Transketolase 1 (tkt1) from Vibrio vulnificus (strain YJ016).